We begin with the raw amino-acid sequence, 638 residues long: 1-deoxy-D-xylulose-5-phosphate synthase (638 aa).

Residues histidine 79 and 120–122 (GHS) each bind thiamine diphosphate. Aspartate 151 lines the Mg(2+) pocket. Thiamine diphosphate is bound by residues 152 to 153 (GA), asparagine 182, tyrosine 291, and glutamate 373. Residue asparagine 182 coordinates Mg(2+).

The protein belongs to the transketolase family. DXPS subfamily. As to quaternary structure, homodimer. Requires Mg(2+) as cofactor. The cofactor is thiamine diphosphate.

The enzyme catalyses D-glyceraldehyde 3-phosphate + pyruvate + H(+) = 1-deoxy-D-xylulose 5-phosphate + CO2. The protein operates within metabolic intermediate biosynthesis; 1-deoxy-D-xylulose 5-phosphate biosynthesis; 1-deoxy-D-xylulose 5-phosphate from D-glyceraldehyde 3-phosphate and pyruvate: step 1/1. In terms of biological role, catalyzes the acyloin condensation reaction between C atoms 2 and 3 of pyruvate and glyceraldehyde 3-phosphate to yield 1-deoxy-D-xylulose-5-phosphate (DXP). The protein is 1-deoxy-D-xylulose-5-phosphate synthase of Xanthomonas campestris pv. campestris (strain 8004).